The sequence spans 464 residues: ATP synthase subunit beta (464 aa).

An ATP-binding site is contributed by 153-160 (GGAGVGKT).

The protein belongs to the ATPase alpha/beta chains family. As to quaternary structure, F-type ATPases have 2 components, CF(1) - the catalytic core - and CF(0) - the membrane proton channel. CF(1) has five subunits: alpha(3), beta(3), gamma(1), delta(1), epsilon(1). CF(0) has three main subunits: a(1), b(2) and c(9-12). The alpha and beta chains form an alternating ring which encloses part of the gamma chain. CF(1) is attached to CF(0) by a central stalk formed by the gamma and epsilon chains, while a peripheral stalk is formed by the delta and b chains.

The protein localises to the cell inner membrane. It catalyses the reaction ATP + H2O + 4 H(+)(in) = ADP + phosphate + 5 H(+)(out). In terms of biological role, produces ATP from ADP in the presence of a proton gradient across the membrane. The catalytic sites are hosted primarily by the beta subunits. This Burkholderia cenocepacia (strain ATCC BAA-245 / DSM 16553 / LMG 16656 / NCTC 13227 / J2315 / CF5610) (Burkholderia cepacia (strain J2315)) protein is ATP synthase subunit beta.